Reading from the N-terminus, the 1422-residue chain is MYFLSGWPKRLLCAPRSPAEAPLHVQSDPRRAFFAVLAPARLSIWYSRPSVLIVTYKEPAKSSTQFGSYKQAEWRPDSTMIAVSTANGYILFFHITSSRGDKYLYEPVYPKGSPQMKGIPHFKEEHCAPALNLEMKKILDLQAPIMSLQSVLEDLLVATSDGLLHLIHWEGMTNGRKAINLSTVPFSVDLQSSRVGSFLGFADVHIKDMEYCATLDGFAVVFNDGKVGFITPVSSRFTAEQLHGVWPQDVIDGTCVAVNNKYRLMAFGCASGCVQVYTIDNTTGAMLLSHKLELTAKQYPDIWNKTGAVKLIRWSPDNSAVIVTWEYGGLSLWSVFGAQLICTLGGDFAYRSDGTKKDPLKINSMSWGAEGYHLWVISGLGSQHTQIETDLRSTVKEPSILLFQFIKSVLTVNPCMSNQEQVLLQGEDRLYLNCGEASQAQNPKYSSARAERMPRHEKSPFADGGLEAPGLSTLLGHRHWHVVQISSTYLESNWPIRFSAIDKLGQNIAVAGKFGFAHYSLLTKKWKLFGNITQEQNMIVTGGLAWWDDFMVLACYNLSDCQEELRIYLRTSNLDNAFAHVTKAPMETLLLSVFRDMVVVFRADCSICLYSIERKSDGSNTTASVQVLQEVSMSRYIPHPFLVVSVTLTSVSTENGISLKMPQQARDAESIMLNLAGQLIMMQRDRSGPQIREKDSHPNQRKLLPFCPPVVLAQSVENVWTTCRANKQKRHLLEALWLSCGGAGMKVWLPLFPRDHRKPHSFLSQRIMLPFHINIYPLAVLFEDALVLGAVNDTLLYDSLYTRSSAREQLEVLFPFCVVERTSQIYLHHILRQLLVRNLGEQALLLAQSCAALPYFPHVLELMLHEVLEEEATSREPIPDPLLPTVAKFITEFPLFLQTVVHCARKTEYALWNYLFAAVGNPKDLFEECLMAQDLDTAASYLIILQNMEVPAVSRQHATLLFNTALEQGKWDLCRHMIRFLKAIGSGESETPPSTPTSQEPSSSGGFEFFRNRSISLSQSAENVPPGKFGLQKTLSMPTGPSGKRWSKDSECAENMYIDMMLWRHARRLLEEVRLKDLGCFAAQLGFELISWLCKERTRAARVDNFVVALKRLHKDFLWPLPIIPASSISSPFKNGKCRAVGEQMLKSQSADPFITPEMDAGISNIQRSQSWLSNIGPTHRDTDRASSPGPQMQDAFLSPLSNKGDECSIGSATDLTESSSVVDGDWTMVDENFSTLSLTQSELEHISMELASKGPHKSQVQLRYLLHIFMEAGCLDWCVVIGLILRESSVVSQLLGIAQSSEMDGEMLQNIKSGLQAVDRWASTDCPGYKPFLNIIKPQLQKLSEITEELVQPDTFQPVTVGKTPEQTSPRAEENRGSCSHGSISQSEPGSNNVVSRKEEDTTQADEEEPLQDGAYDCSVS.

2 WD repeats span residues 64 to 103 (TQFG…GDKY) and 304 to 343 (NKTG…LICT). Disordered regions lie at residues 442-462 (NPKY…SPFA) and 986-1005 (SGES…SSSG). Positions 449–460 (RAERMPRHEKSP) are enriched in basic and acidic residues. Phosphothreonine occurs at positions 991 and 995. A phosphoserine mark is found at serine 1014, serine 1016, serine 1018, serine 1036, and serine 1171. Residues 1021–1048 (AENVPPGKFGLQKTLSMPTGPSGKRWSK) are disordered. Disordered stretches follow at residues 1179–1198 (THRD…DAFL) and 1355–1422 (DTFQ…CSVS). Residues 1378 to 1396 (GSCSHGSISQSEPGSNNVV) show a composition bias toward polar residues. The segment covering 1403-1412 (TTQADEEEPL) has biased composition (acidic residues).

This sequence belongs to the RIC1 family. Forms a complex with RGP1; the interaction enhances RAB6A GTPase activity. Interacts (via central domain) with RGP1. Interacts with RAB6A; the interaction is direct with a preference for RAB6A-GDP. Interacts (via C-terminus domain) with RAB33B; the interaction is direct with a preference for RAB33B-GTP. Interacts with GJA1. Expressed in the eye lens.

Its subcellular location is the cytoplasm. The protein resides in the cytosol. It is found in the membrane. In terms of biological role, the RIC1-RGP1 complex acts as a guanine nucleotide exchange factor (GEF), which activates RAB6A by exchanging bound GDP for free GTP, and may thereby be required for efficient fusion of endosome-derived vesicles with the Golgi compartment. The RIC1-RGP1 complex participates in the recycling of mannose-6-phosphate receptors. Required for phosphorylation and localization of GJA1. Is a regulator of procollagen transport and secretion, and is required for correct cartilage morphogenesis and development of the craniofacial skeleton. This is Guanine nucleotide exchange factor subunit RIC1 from Mus musculus (Mouse).